We begin with the raw amino-acid sequence, 422 residues long: Serine--tRNA ligase (422 aa).

Residue 229–231 (TAE) participates in L-serine binding. 260-262 (RKE) serves as a coordination point for ATP. Position 283 (E283) interacts with L-serine. 347-350 (EISS) serves as a coordination point for ATP. S383 serves as a coordination point for L-serine.

It belongs to the class-II aminoacyl-tRNA synthetase family. Type-1 seryl-tRNA synthetase subfamily. As to quaternary structure, homodimer. The tRNA molecule binds across the dimer.

It localises to the cytoplasm. The catalysed reaction is tRNA(Ser) + L-serine + ATP = L-seryl-tRNA(Ser) + AMP + diphosphate + H(+). It carries out the reaction tRNA(Sec) + L-serine + ATP = L-seryl-tRNA(Sec) + AMP + diphosphate + H(+). It functions in the pathway aminoacyl-tRNA biosynthesis; selenocysteinyl-tRNA(Sec) biosynthesis; L-seryl-tRNA(Sec) from L-serine and tRNA(Sec): step 1/1. Its function is as follows. Catalyzes the attachment of serine to tRNA(Ser). Is also able to aminoacylate tRNA(Sec) with serine, to form the misacylated tRNA L-seryl-tRNA(Sec), which will be further converted into selenocysteinyl-tRNA(Sec). The sequence is that of Serine--tRNA ligase from Natranaerobius thermophilus (strain ATCC BAA-1301 / DSM 18059 / JW/NM-WN-LF).